Here is a 96-residue protein sequence, read N- to C-terminus: Small ribosomal subunit protein bS6 (96 aa).

The protein belongs to the bacterial ribosomal protein bS6 family.

In terms of biological role, binds together with bS18 to 16S ribosomal RNA. The sequence is that of Small ribosomal subunit protein bS6 from Streptococcus pneumoniae serotype 19F (strain G54).